The sequence spans 146 residues: UPF0306 protein HD_1359 (146 aa).

Belongs to the UPF0306 family.

The sequence is that of UPF0306 protein HD_1359 from Haemophilus ducreyi (strain 35000HP / ATCC 700724).